Here is a 384-residue protein sequence, read N- to C-terminus: Mitogen-activated protein kinase 8 (384 aa).

The Protein kinase domain maps to 26 to 321 (YQNLKPIGSG…VDEALQHPYI (296 aa)). ATP contacts are provided by residues 32-40 (IGSGAQGIV) and K55. C116 is subject to S-nitrosocysteine. The active-site Proton acceptor is the D151. Phosphothreonine; by MAP2K7 is present on T183. Positions 183-185 (TPY) match the TXY motif. Y185 is modified (phosphotyrosine; by MAP2K4). S377 carries the phosphoserine modification.

It belongs to the protein kinase superfamily. CMGC Ser/Thr protein kinase family. MAP kinase subfamily. Binds to at least four scaffolding proteins, MAPK8IP1/JIP-1, MAPK8IP2/JIP-2, MAPK8IP3/JIP-3/JSAP1 and SPAG9/MAPK8IP4/JIP-4. These proteins also bind other components of the JNK signaling pathway. Forms a complex with MAPK8IP1 and ARHGEF28. Interacts with TP53 and WWOX. Interacts with JAMP. Interacts with NFATC4. Interacts with MECOM; regulates JNK signaling. Interacts with PIN1; this interaction mediates MAPK8 conformational changes leading to the binding of MAPK8 to its substrates. Interacts with HSF1 (via D domain and preferentially with hyperphosphorylated form); this interaction occurs under both normal growth conditions and immediately upon heat shock. Interacts (phosphorylated form) with NFE2; the interaction phosphorylates NFE2 in undifferentiated cells. Interacts with GRIPAP1. Interacts with POU5F1; phosphorylates POU5F1 at 'Ser-347'. Found in a complex with SH3RF1, RAC1, MAP3K11/MLK3, MAP2K7/MKK7 and MAPK8IP1/JIP1. Found in a complex with SH3RF1, RAC2, MAP3K7/TAK1, MAP2K7/MKK7, MAPK8IP1/JIP1 and MAPK9/JNK2. Mg(2+) serves as cofactor. In terms of processing, phosphorylated by TAOK2. Dually phosphorylated on Thr-183 and Tyr-185 by MAP2K7 and MAP2K4, which activates the enzyme. May be phosphorylated at Thr-183 and Tyr-185 by MAP3K1/MEKK1. Phosphorylated form is more concentrated at synapses than none-phosphorylated. In terms of tissue distribution, brain (at protein level).

It localises to the cytoplasm. The protein localises to the nucleus. The protein resides in the synapse. The enzyme catalyses L-seryl-[protein] + ATP = O-phospho-L-seryl-[protein] + ADP + H(+). It carries out the reaction L-threonyl-[protein] + ATP = O-phospho-L-threonyl-[protein] + ADP + H(+). Inhibited by SERPINB3. Activated by threonine and tyrosine phosphorylation by either of two dual specificity kinases, MAP2K4 and MAP2K7. MAP2K4 shows a strong preference for Tyr-185 while MAP2K7 phosphorylates Tyr-183 preferentially. Inhibited by dual specificity phosphatases, such as DUSP1. Serine/threonine-protein kinase involved in various processes such as cell proliferation, differentiation, migration, transformation and programmed cell death. Extracellular stimuli such as pro-inflammatory cytokines or physical stress stimulate the stress-activated protein kinase/c-Jun N-terminal kinase (SAP/JNK) signaling pathway. In this cascade, two dual specificity kinases MAP2K4/MKK4 and MAP2K7/MKK7 phosphorylate and activate MAPK8/JNK1. In turn, MAPK8/JNK1 phosphorylates a number of transcription factors, primarily components of AP-1 such as JUN, JDP2 and ATF2 and thus regulates AP-1 transcriptional activity. Phosphorylates the replication licensing factor CDT1, inhibiting the interaction between CDT1 and the histone H4 acetylase HBO1 to replication origins. Loss of this interaction abrogates the acetylation required for replication initiation. Promotes stressed cell apoptosis by phosphorylating key regulatory factors including p53/TP53 and Yes-associates protein YAP1. In T-cells, MAPK8 and MAPK9 are required for polarized differentiation of T-helper cells into Th1 cells. Contributes to the survival of erythroid cells by phosphorylating the antagonist of cell death BAD upon EPO stimulation. Mediates starvation-induced BCL2 phosphorylation, BCL2 dissociation from BECN1, and thus activation of autophagy. Phosphorylates STMN2 and hence regulates microtubule dynamics, controlling neurite elongation in cortical neurons. In the developing brain, through its cytoplasmic activity on STMN2, negatively regulates the rate of exit from multipolar stage and of radial migration from the ventricular zone. Phosphorylates several other substrates including heat shock factor protein 4 (HSF4), the deacetylase SIRT1, ELK1, or the E3 ligase ITCH. Phosphorylates the CLOCK-BMAL1 heterodimer and plays a role in the regulation of the circadian clock. Phosphorylates the heat shock transcription factor HSF1, suppressing HSF1-induced transcriptional activity. Phosphorylates POU5F1, which results in the inhibition of POU5F1's transcriptional activity and enhances its proteasomal degradation. Phosphorylates JUND and this phosphorylation is inhibited in the presence of MEN1. In neurons, phosphorylates SYT4 which captures neuronal dense core vesicles at synapses. Phosphorylates EIF4ENIF1/4-ET in response to oxidative stress, promoting P-body assembly. Phosphorylates SIRT6 in response to oxidative stress, stimulating its mono-ADP-ribosyltransferase activity. Phosphorylates NLRP3, promoting assembly of the NLRP3 inflammasome. Phosphorylates ALKBH5 in response to reactive oxygen species (ROS), promoting ALKBH5 sumoylation and inactivation. The chain is Mitogen-activated protein kinase 8 (Mapk8) from Mus musculus (Mouse).